Reading from the N-terminus, the 430-residue chain is RNA-binding protein 34 (430 aa).

Disordered regions lie at residues M1–R55, V72–E123, and E134–A153. Phosphoserine occurs at positions 14, 28, and 99. The span at D23–R34 shows a compositional bias: basic and acidic residues. Residues T113–E123 are compositionally biased toward basic and acidic residues. K151 is modified (N6-acetyllysine). RRM domains follow at residues R185–E280 and R287–N364. Residue K242 forms a Glycyl lysine isopeptide (Lys-Gly) (interchain with G-Cter in SUMO2) linkage. Phosphoserine is present on S288. Disordered regions lie at residues K365–E395 and K411–K430.

Belongs to the RRM RBM34 family.

The protein resides in the nucleus. The protein localises to the nucleolus. This is RNA-binding protein 34 (RBM34) from Homo sapiens (Human).